We begin with the raw amino-acid sequence, 156 residues long: Small ribosomal subunit protein uS7c (156 aa).

Belongs to the universal ribosomal protein uS7 family. In terms of assembly, part of the 30S ribosomal subunit.

Its subcellular location is the plastid. It localises to the chloroplast. In terms of biological role, one of the primary rRNA binding proteins, it binds directly to 16S rRNA where it nucleates assembly of the head domain of the 30S subunit. In Cyanidium caldarium (Red alga), this protein is Small ribosomal subunit protein uS7c (rps7).